The sequence spans 297 residues: Syntaxin-4 (297 aa).

Positions 1–12 (MRDRTHELRQGD) are enriched in basic and acidic residues. The tract at residues 1–21 (MRDRTHELRQGDDSSDEEDKE) is disordered. The Cytoplasmic portion of the chain corresponds to 1 to 275 (MRDRTHELRQ…QKKARKKKVL (275 aa)). Residues Ser-14 and Ser-15 each carry the phosphoserine modification. Thr-31 is modified (phosphothreonine). A phosphoserine mark is found at Ser-36, Ser-117, Ser-208, and Ser-248. Positions 43–163 (HKVRTIRQTI…ERIRRQLKIT (121 aa)) form a coiled coil. Positions 154–297 (ERIRRQLKIT…AVIIGVTVVG (144 aa)) are interaction with CENPF. The 63-residue stretch at 200–262 (LNEISARHSE…ERGQEHVKTA (63 aa)) folds into the t-SNARE coiled-coil homology domain. The chain crosses the membrane as a helical; Anchor for type IV membrane protein span at residues 276 to 296 (IAICVSITVVLLAVIIGVTVV). Gly-297 is a topological domain (extracellular).

It belongs to the syntaxin family. In terms of assembly, component of the SNARE complex composed of STX4, SNAP23 and VAMP7 that interacts with SYT7 during lysosomal exocytosis. Found in a complex with VAMP8 and SNAP23. Detected in a complex with SNAP23 and STXBP4. Interacts with VAMP2. Interacts with SNAP23 and SNAPIN. Interacts with LLGL1. Interacts (via C-terminus) with CENPF. Interacts with DOC2B. Interacts with STXBP6. Interacts with STXBP3; excludes interaction with DOC2B and SNAP25. Interacts with STXBP4; excludes interaction with VAMP2. Interacts with STXBP5L. In terms of tissue distribution, expressed in neutrophils and neutrophil-differentiated HL-60 cells. Expression in neutrophils increases with differentiation.

It is found in the cell membrane. The protein localises to the cell projection. Its subcellular location is the neuron projection. The protein resides in the stereocilium. Functionally, plasma membrane t-SNARE that mediates docking of transport vesicles. Necessary for the translocation of SLC2A4 from intracellular vesicles to the plasma membrane. In neurons, recruited at neurite tips to membrane domains rich in the phospholipid 1-oleoyl-2-palmitoyl-PC (OPPC) which promotes neurite tip surface expression of the dopamine transporter SLC6A3/DAT by facilitating fusion of SLC6A3-containing transport vesicles with the plasma membrane. Together with STXB3 and VAMP2, may also play a role in docking/fusion of intracellular GLUT4-containing vesicles with the cell surface in adipocytes and in docking of synaptic vesicles at presynaptic active zones. Required for normal hearing. The chain is Syntaxin-4 (STX4) from Homo sapiens (Human).